Reading from the N-terminus, the 361-residue chain is Ribosomal RNA large subunit methyltransferase M (361 aa).

S-adenosyl-L-methionine is bound by residues Ser187, 220-223, Asp239, Asp259, and Asp276; that span reads CPGG. Lys305 (proton acceptor) is an active-site residue.

This sequence belongs to the class I-like SAM-binding methyltransferase superfamily. RNA methyltransferase RlmE family. RlmM subfamily. As to quaternary structure, monomer.

It localises to the cytoplasm. It carries out the reaction cytidine(2498) in 23S rRNA + S-adenosyl-L-methionine = 2'-O-methylcytidine(2498) in 23S rRNA + S-adenosyl-L-homocysteine + H(+). In terms of biological role, catalyzes the 2'-O-methylation at nucleotide C2498 in 23S rRNA. The chain is Ribosomal RNA large subunit methyltransferase M from Shewanella sp. (strain W3-18-1).